Consider the following 366-residue polypeptide: Nitronate monooxygenase (366 aa).

Residues Asn-74, Gln-181, Gly-186, Gly-223, and 242-245 contribute to the FMN site; that span reads QLGT.

This sequence belongs to the nitronate monooxygenase family. NMO class I subfamily. The cofactor is FMN.

It carries out the reaction 3 propionate 3-nitronate + 3 O2 + H2O = 3 3-oxopropanoate + 2 nitrate + nitrite + H2O2 + 3 H(+). Nitronate monooxygenase that uses molecular oxygen to catalyze the oxidative denitrification of alkyl nitronates. Acts on propionate 3-nitronate (P3N), the presumed physiological substrate. Is likely involved in the degradation of P3N, that allows B.phytofirmans PsJN to grow on 3-nitropropionate/P3N as the sole source of nitrogen and carbon. Also probably functions in the detoxification of P3N, a metabolic poison produced by plants and fungi as a defense mechanism. Cannot oxidize nitroalkanes such as 3-nitropropionate, nitroethane, or 1-nitropropane. This Paraburkholderia phytofirmans (strain DSM 17436 / LMG 22146 / PsJN) (Burkholderia phytofirmans) protein is Nitronate monooxygenase.